Here is a 72-residue protein sequence, read N- to C-terminus: SRY-related protein AES1 (72 aa).

Positions 1–69 form a DNA-binding region, HMG box; the sequence is VKRPMNAFMV…KHMADYPDYK (69 aa).

The protein resides in the nucleus. The protein is SRY-related protein AES1 of Alligator mississippiensis (American alligator).